A 211-amino-acid chain; its full sequence is MYQPDFPPVPFRLGLYPVVDSVQWIERLLDAGVRTLQLRIKDRRNEEVEADVVAAIALGRRYNARLFINDYWRLAIKHQAYGVHLGQEDLQATDLNAIRAAGLRLGVSTHDDMEIDVALAARPSYIALGHVFPTQTKQMPSAPQGLEQLARHVERLADYPTVAIGGISLARAPAVIATGVGSIAVVSAITQAADWRLATAQLLEIAGVGDE.

Residues 37–41 and Asn-69 each bind 4-amino-2-methyl-5-(diphosphooxymethyl)pyrimidine; that span reads QLRIK. Asp-70 and Asp-89 together coordinate Mg(2+). Ser-108 contacts 4-amino-2-methyl-5-(diphosphooxymethyl)pyrimidine. 134–136 is a 2-[(2R,5Z)-2-carboxy-4-methylthiazol-5(2H)-ylidene]ethyl phosphate binding site; the sequence is TQT. Residue Lys-137 participates in 4-amino-2-methyl-5-(diphosphooxymethyl)pyrimidine binding. 2-[(2R,5Z)-2-carboxy-4-methylthiazol-5(2H)-ylidene]ethyl phosphate-binding positions include Gly-166 and 186–187; that span reads VS.

The protein belongs to the thiamine-phosphate synthase family. The cofactor is Mg(2+).

It catalyses the reaction 2-[(2R,5Z)-2-carboxy-4-methylthiazol-5(2H)-ylidene]ethyl phosphate + 4-amino-2-methyl-5-(diphosphooxymethyl)pyrimidine + 2 H(+) = thiamine phosphate + CO2 + diphosphate. The catalysed reaction is 2-(2-carboxy-4-methylthiazol-5-yl)ethyl phosphate + 4-amino-2-methyl-5-(diphosphooxymethyl)pyrimidine + 2 H(+) = thiamine phosphate + CO2 + diphosphate. The enzyme catalyses 4-methyl-5-(2-phosphooxyethyl)-thiazole + 4-amino-2-methyl-5-(diphosphooxymethyl)pyrimidine + H(+) = thiamine phosphate + diphosphate. It functions in the pathway cofactor biosynthesis; thiamine diphosphate biosynthesis; thiamine phosphate from 4-amino-2-methyl-5-diphosphomethylpyrimidine and 4-methyl-5-(2-phosphoethyl)-thiazole: step 1/1. In terms of biological role, condenses 4-methyl-5-(beta-hydroxyethyl)thiazole monophosphate (THZ-P) and 2-methyl-4-amino-5-hydroxymethyl pyrimidine pyrophosphate (HMP-PP) to form thiamine monophosphate (TMP). The chain is Thiamine-phosphate synthase from Shigella sonnei (strain Ss046).